Here is a 1179-residue protein sequence, read N- to C-terminus: DNA-directed RNA polymerase subunit beta' (1179 aa).

Zn(2+)-binding residues include Cys-60, Cys-62, Cys-75, and Cys-78. Residues Asp-450, Asp-452, and Asp-454 each contribute to the Mg(2+) site. Cys-791, Cys-865, Cys-872, and Cys-875 together coordinate Zn(2+).

It belongs to the RNA polymerase beta' chain family. As to quaternary structure, the RNAP catalytic core consists of 2 alpha, 1 beta, 1 beta' and 1 omega subunit. When a sigma factor is associated with the core the holoenzyme is formed, which can initiate transcription. Mg(2+) is required as a cofactor. Requires Zn(2+) as cofactor.

It carries out the reaction RNA(n) + a ribonucleoside 5'-triphosphate = RNA(n+1) + diphosphate. Its function is as follows. DNA-dependent RNA polymerase catalyzes the transcription of DNA into RNA using the four ribonucleoside triphosphates as substrates. The polypeptide is DNA-directed RNA polymerase subunit beta' (Alkaliphilus oremlandii (strain OhILAs) (Clostridium oremlandii (strain OhILAs))).